Reading from the N-terminus, the 286-residue chain is MVLETPVCSPIDKESSSDDVQLNKPPKKKRKLDVVYPPRDNTSSSSDVKPKVPGYCGVKAIGCNRSDELLAEVALHSYNSQTGTNLELMTVTQVMLQSVAHINYHMILDAFDPANNSLSSIEICLWDAAVKNNEKLRLVTTFCSLEGSGDKGSQWDPNGVDVLYTGVMPKWLDDGALSGSEKLHYYEVNDSDLQENKWLHLYAQVGAYSKWDLGMVKHFPLEIKKVVVQTMEDDIESNLKLKSSNAIFYITFTTSGGVECACIIRQTRNGRPQHMCLEINNVEMDK.

The tract at residues 1–49 (MVLETPVCSPIDKESSSDDVQLNKPPKKKRKLDVVYPPRDNTSSSSDVK) is disordered.

It belongs to the UPF0725 (EMB2204) family.

This Arabidopsis thaliana (Mouse-ear cress) protein is UPF0725 protein At2g20620.